A 417-amino-acid polypeptide reads, in one-letter code: Serine hydroxymethyltransferase (417 aa).

(6S)-5,6,7,8-tetrahydrofolate contacts are provided by residues leucine 121 and 125–127 (GHL). At lysine 229 the chain carries N6-(pyridoxal phosphate)lysine. 355-357 (SPF) lines the (6S)-5,6,7,8-tetrahydrofolate pocket.

It belongs to the SHMT family. As to quaternary structure, homodimer. The cofactor is pyridoxal 5'-phosphate.

Its subcellular location is the cytoplasm. It catalyses the reaction (6R)-5,10-methylene-5,6,7,8-tetrahydrofolate + glycine + H2O = (6S)-5,6,7,8-tetrahydrofolate + L-serine. The protein operates within one-carbon metabolism; tetrahydrofolate interconversion. It functions in the pathway amino-acid biosynthesis; glycine biosynthesis; glycine from L-serine: step 1/1. In terms of biological role, catalyzes the reversible interconversion of serine and glycine with tetrahydrofolate (THF) serving as the one-carbon carrier. This reaction serves as the major source of one-carbon groups required for the biosynthesis of purines, thymidylate, methionine, and other important biomolecules. Also exhibits THF-independent aldolase activity toward beta-hydroxyamino acids, producing glycine and aldehydes, via a retro-aldol mechanism. In Xylella fastidiosa (strain M12), this protein is Serine hydroxymethyltransferase.